A 426-amino-acid polypeptide reads, in one-letter code: Enolase (426 aa).

Gln163 lines the (2R)-2-phosphoglycerate pocket. The active-site Proton donor is Glu205. Asp242, Glu283, and Asp310 together coordinate Mg(2+). (2R)-2-phosphoglycerate-binding residues include Lys335, Arg364, Ser365, and Lys386. The active-site Proton acceptor is the Lys335.

It belongs to the enolase family. The cofactor is Mg(2+).

It localises to the cytoplasm. Its subcellular location is the secreted. The protein localises to the cell surface. The enzyme catalyses (2R)-2-phosphoglycerate = phosphoenolpyruvate + H2O. Its pathway is carbohydrate degradation; glycolysis; pyruvate from D-glyceraldehyde 3-phosphate: step 4/5. Functionally, catalyzes the reversible conversion of 2-phosphoglycerate (2-PG) into phosphoenolpyruvate (PEP). It is essential for the degradation of carbohydrates via glycolysis. This chain is Enolase, found in Beutenbergia cavernae (strain ATCC BAA-8 / DSM 12333 / CCUG 43141 / JCM 11478 / NBRC 16432 / NCIMB 13614 / HKI 0122).